The chain runs to 392 residues: ABSCISIC ACID-INSENSITIVE 5-like protein 4 (392 aa).

The disordered stretch occupies residues 1-22 (MGTHIDINNLGGDTSRGNESKP). Phosphoserine is present on residues Ser-28, Ser-50, and Ser-96. Thr-135 carries the phosphothreonine modification. Positions 266–297 (NMGGAGGTVTATSPGTSSAENNTWSSPVPYVF) are disordered. Over residues 274 to 291 (VTATSPGTSSAENNTWSS) the composition is skewed to polar residues. Residues 311-374 (VERRQKRMIK…NSELKEFSKQ (64 aa)) form the bZIP domain. Residues 313-332 (RRQKRMIKNRESAARSRARK) form a basic motif region. Positions 339-360 (LEAEIESLKLVNQDLQKKQAEI) are leucine-zipper.

It belongs to the bZIP family. ABI5 subfamily. DNA-binding heterodimer. Interacts with ABI3 and the AFP proteins AFP1, AFP2, AFP3 and AFP4. Post-translationally, phosphorylated by CPK4, CPK11, SRK2D and SRK2I in vitro.

The protein localises to the nucleus. In terms of biological role, binds to the ABA-responsive element (ABRE). Could participate in abscisic acid-regulated gene expression. The polypeptide is ABSCISIC ACID-INSENSITIVE 5-like protein 4 (ABF1) (Arabidopsis thaliana (Mouse-ear cress)).